The sequence spans 343 residues: Flavonoid 3'-O-methyltransferase FOMT (343 aa).

Residues G184, D207, D227, M228, M240, and K241 each contribute to the S-adenosyl-L-homocysteine site. H245 functions as the Proton acceptor in the catalytic mechanism. Catalysis depends on residues E273 and E305.

It belongs to the class I-like SAM-binding methyltransferase superfamily. Cation-independent O-methyltransferase family. As to quaternary structure, homodimer.

It catalyses the reaction 3',5-dihydroxy-3,4',7-trimethoxyflavone + S-adenosyl-L-methionine = 5-hydroxy-3,7,3',4'-tetramethoxyflavone + S-adenosyl-L-homocysteine + H(+). Its pathway is flavonoid metabolism. Its activity is regulated as follows. Inhibited by nickel (NiCl(2) and NiSO(4)) and para-chloromercuribenzoate. In terms of biological role, catalyzes the 3'- or 5'-O-methylation of partially methylated flavonols, but does not accept quercetin or caffeate as substrates for methylation. The protein is Flavonoid 3'-O-methyltransferase FOMT of Chrysosplenium americanum (American golden saxifrage).